The primary structure comprises 910 residues: E3 ubiquitin-protein ligase MARCHF6 (910 aa).

Methionine 1 carries the N-acetylmethionine modification. An RING-CH-type zinc finger spans residues 1–62 (MDTAEEDICR…ELCKHRFAFT (62 aa)). Residues 1 to 91 (MDTAEEDICR…LVTSIGTAIR (91 aa)) are Cytoplasmic-facing. Residues cysteine 9, cysteine 12, cysteine 26, cysteine 28, histidine 36, cysteine 39, cysteine 52, and cysteine 55 each coordinate Zn(2+). The chain crosses the membrane as a helical span at residues 92 to 112 (YWFHYTLVAFAWLGVVPLTAC). The Extracellular segment spans residues 113 to 142 (RIYKCLFTGSVSSLLTLPLDMLSTENLLAD). Residues 143–163 (CLQGCFVVTCTLCAFISLVWL) form a helical membrane-spanning segment. Over 164-283 (REQIVHGGAP…WERMLGLDGS (120 aa)) the chain is Cytoplasmic. Residues 185–256 (AAGHHQNEAP…AADANNGAQD (72 aa)) are disordered. Residues 223-248 (DAQDDQAEEEEEDNEEEDDAGVEDAA) are compositionally biased toward acidic residues. Residues 284–304 (LVFLEHVFWVVSLNTLFILVF) traverse the membrane as a helical segment. The Extracellular portion of the chain corresponds to 305–336 (AFCPYHIGHFSLVGLGFEEHVQASHFEGLITT). The helical transmembrane segment at 337–357 (IVGYILLAITLIICHGLATLV) threads the bilayer. The Cytoplasmic segment spans residues 358-376 (KFHRSRRLLGVCYIVVKVS). The helical transmembrane segment at 377 to 397 (LLVVVEIGVFPLICGWWLDIC) threads the bilayer. Residues 398–421 (SLEMFDATLKDRELSFQSAPGTTM) are Extracellular-facing. The helical transmembrane segment at 422 to 442 (FLHWLVGMVYVFYFASFILLL) threads the bilayer. Residues 443–480 (REVLRPGVLWFLRNLNDPDFNPVQEMIHLPIYRHLRRF) lie on the Cytoplasmic side of the membrane. A helical membrane pass occupies residues 481-501 (ILSVIVFGSIVLLMLWLPIRI). Over 502–519 (IKSVLPNFLPYNVMLYSD) the chain is Extracellular. Residues 520–540 (APVSELSLELLLLQVVLPALL) traverse the membrane as a helical segment. The Cytoplasmic segment spans residues 541 to 632 (EQGHTRQWLK…YRRPLNFPLR (92 aa)). Residues 633–653 (IFLLIVFMCITLLIASLICLT) form a helical membrane-spanning segment. Residues 654-678 (LPVFAGRWLMSFWTGTAKIHELYTA) lie on the Extracellular side of the membrane. A helical membrane pass occupies residues 679 to 699 (ACGLYVCWLTIRAVTVMVAWM). Residues 700–721 (PQGRRVIFQKVKEWSLMIMKTL) lie on the Cytoplasmic side of the membrane. The chain crosses the membrane as a helical span at residues 722-742 (IVAVLLAGVVPLLLGLLFELV). At 743-764 (IVAPLRVPLDQTPLFYPWQDWA) the chain is on the extracellular side. The helical transmembrane segment at 765–785 (LGVLHAKIIAAITLMGPQWWL) threads the bilayer. Residues 786–815 (KTVIEQVYANGIRNIDLHYIVRKLAAPVIS) are Cytoplasmic-facing. Residues 816–836 (VLLLSLCVPYVIASGVVPLLG) form a helical membrane-spanning segment. Over 837–848 (VTAEMQNLVHRR) the chain is Extracellular. The chain crosses the membrane as a helical span at residues 849–869 (IYPFLLMVVVLMAILSFQVRQ). Over 870 to 910 (FKRLYEHIKNDKYLVGQRLVNYERKSGKQGSSPPPPQSSQE) the chain is Cytoplasmic.

In terms of assembly, interacts with DIO2. Interacts with SQLE. Auto-ubiquitinated, which results in proteasomal degradation. Deubiquitinated by USP19; protecting MARCHF6 from p97-mediated proteasomal degradation. In terms of tissue distribution, present in brain (at protein level).

The protein localises to the endoplasmic reticulum membrane. The enzyme catalyses S-ubiquitinyl-[E2 ubiquitin-conjugating enzyme]-L-cysteine + [acceptor protein]-L-lysine = [E2 ubiquitin-conjugating enzyme]-L-cysteine + N(6)-ubiquitinyl-[acceptor protein]-L-lysine.. It functions in the pathway protein modification; protein ubiquitination. In terms of biological role, endoplasmic reticulum membrane-associated E3 ubiquitin ligase that plays a critical role in mitigating endoplasmic reticulum stress, the regulation of cholesterol and lipid homeostasis, and ferroptosis. Acts as a pivotal component of both the Ac/N-degron pathway (targeting the N-terminal acetyl group of substrates) and the ER-associated protein degradation-cytosol (ERAD-C) pathway (targeting misfolded substrates). For instance, mediates the degradation of Ac/N-degron-bearing proteins such as the G-protein regulator RGS2 and the lipid droplet protein PLIN2. Suppresses endoplasmic reticulum stress and ferroptosis through cytosolic POMC degradation. Prevents ferroptosis by acting as a NADPH sensor during lipid peroxidation through its C-terminal regulatory region. Facilitates also the degradation of selected endoplasmic reticulum proteins by associating with signal peptide peptidase for the turnover of endogenous tail-anchored proteins. Promotes ubiquitination of DIO2, leading to its degradation. By ubiquitinating and thereby modulating the stability of many proteins of the cholesterol pathway including SQLE, CYP51A1, CYP11A1 and HMGCR, acts as a crucial post-translational regulator of cholesterol synthesis. The sequence is that of E3 ubiquitin-protein ligase MARCHF6 from Homo sapiens (Human).